The following is an 827-amino-acid chain: 4-hydroxy-3-methylbut-2-enyl diphosphate reductase (827 aa).

The segment at 1–284 (MEIIRAKHMG…MNIEKKVRGI (284 aa)) is 4-hydroxy-3-methylbut-2-enyl diphosphate reductase. Cysteine 12 is a [4Fe-4S] cluster binding site. The (2E)-4-hydroxy-3-methylbut-2-enyl diphosphate site is built by histidine 40 and histidine 79. The dimethylallyl diphosphate site is built by histidine 40 and histidine 79. Residues histidine 40 and histidine 79 each coordinate isopentenyl diphosphate. Residue cysteine 101 participates in [4Fe-4S] cluster binding. Histidine 129 is a (2E)-4-hydroxy-3-methylbut-2-enyl diphosphate binding site. Dimethylallyl diphosphate is bound at residue histidine 129. An isopentenyl diphosphate-binding site is contributed by histidine 129. Glutamate 131 serves as the catalytic Proton donor. Threonine 168 provides a ligand contact to (2E)-4-hydroxy-3-methylbut-2-enyl diphosphate. A [4Fe-4S] cluster-binding site is contributed by cysteine 196. (2E)-4-hydroxy-3-methylbut-2-enyl diphosphate is bound by residues serine 224, serine 225, asparagine 226, and serine 268. Dimethylallyl diphosphate-binding residues include serine 224, serine 225, asparagine 226, and serine 268. 4 residues coordinate isopentenyl diphosphate: serine 224, serine 225, asparagine 226, and serine 268. S1 motif domains are found at residues 477–545 (GQIV…LSIK), 562–632 (DDEI…LGIK), 649–716 (DTVI…GSLK), and 733–802 (GTTV…LSIK).

It in the N-terminal section; belongs to the IspH family. The cofactor is [4Fe-4S] cluster.

It catalyses the reaction isopentenyl diphosphate + 2 oxidized [2Fe-2S]-[ferredoxin] + H2O = (2E)-4-hydroxy-3-methylbut-2-enyl diphosphate + 2 reduced [2Fe-2S]-[ferredoxin] + 2 H(+). The catalysed reaction is dimethylallyl diphosphate + 2 oxidized [2Fe-2S]-[ferredoxin] + H2O = (2E)-4-hydroxy-3-methylbut-2-enyl diphosphate + 2 reduced [2Fe-2S]-[ferredoxin] + 2 H(+). It participates in isoprenoid biosynthesis; dimethylallyl diphosphate biosynthesis; dimethylallyl diphosphate from (2E)-4-hydroxy-3-methylbutenyl diphosphate: step 1/1. Its pathway is isoprenoid biosynthesis; isopentenyl diphosphate biosynthesis via DXP pathway; isopentenyl diphosphate from 1-deoxy-D-xylulose 5-phosphate: step 6/6. Functionally, catalyzes the conversion of 1-hydroxy-2-methyl-2-(E)-butenyl 4-diphosphate (HMBPP) into a mixture of isopentenyl diphosphate (IPP) and dimethylallyl diphosphate (DMAPP). Acts in the terminal step of the DOXP/MEP pathway for isoprenoid precursor biosynthesis. In Fusobacterium nucleatum subsp. nucleatum (strain ATCC 25586 / DSM 15643 / BCRC 10681 / CIP 101130 / JCM 8532 / KCTC 2640 / LMG 13131 / VPI 4355), this protein is 4-hydroxy-3-methylbut-2-enyl diphosphate reductase.